We begin with the raw amino-acid sequence, 123 residues long: MSWTYLCDAADVAPNSLKLVDANDIRVVVANYGSGFRAIPPICPHMEEPLDESGVIANCVLTCTKHLWAWNLISLELLGETEKPLKTYELKEEDGKLLAFIAEELTYDFEEEDDMDDDFFSKS.

The Rieske domain occupies 4 to 99 (TYLCDAADVA…LKEEDGKLLA (96 aa)). [2Fe-2S] cluster contacts are provided by Cys-43, His-45, Cys-63, and His-66.

This sequence belongs to the bacterial ring-hydroxylating dioxygenase ferredoxin component family. As to quaternary structure, the MSA monooxygenase system consists of 4 proteins: the 2 subunits of the hydroxylase component (MsmA and MsmB), a ferredoxin (MsmC) and a ferredoxin reductase (MsmD). The ferredoxin component is dimeric. The cofactor is [2Fe-2S] cluster.

The protein resides in the cytoplasm. The enzyme catalyses methanesulfonate + NADH + O2 = sulfite + formaldehyde + NAD(+) + H2O. With respect to regulation, MSAMO is inhibited by metal chelators (such as bathophenanthroline, bathocuprione, neocuprione, alpha-alpha-dipyridil and sodium EDTA) and by sodium azide, sodium arsenate and potassium cyanide. Methanesulfonate monooxygenase (MSAMO) mediates the primary degradation of methanesulfonic acid (MSA) to produce formaldehyd and inorganic sulfite by initial hydroxylation of the carbon atom prior to spontaneous cleavage of the unstable hydroxymethanesulfonic acid. MSAMO has a restricted substrate range that includes only the short-chain aliphatic sulfonates (methane- to butanesulfonate) and excludes all larger molecules, such as arylsulfonates and aromatic sulfonates. All MSAMO components are required for enzyme activity. The protein is Methanesulfonate monooxygenase ferredoxin subunit of Methylosulfonomonas methylovora.